Consider the following 380-residue polypeptide: Tubulin alpha chain (380 aa).

7 residues coordinate GTP: Glu46, Ser115, Gly119, Thr120, Thr154, Asn181, and Asn202. Mg(2+) is bound at residue Glu46. Glu228 is a catalytic residue.

Belongs to the tubulin family. In terms of assembly, dimer of alpha and beta chains. A typical microtubule is a hollow water-filled tube with an outer diameter of 25 nm and an inner diameter of 15 nM. Alpha-beta heterodimers associate head-to-tail to form protofilaments running lengthwise along the microtubule wall with the beta-tubulin subunit facing the microtubule plus end conferring a structural polarity. Microtubules usually have 13 protofilaments but different protofilament numbers can be found in some organisms and specialized cells. It depends on Mg(2+) as a cofactor.

Its subcellular location is the cytoplasm. The protein resides in the cytoskeleton. It carries out the reaction GTP + H2O = GDP + phosphate + H(+). Tubulin is the major constituent of microtubules, a cylinder consisting of laterally associated linear protofilaments composed of alpha- and beta-tubulin heterodimers. Microtubules grow by the addition of GTP-tubulin dimers to the microtubule end, where a stabilizing cap forms. Below the cap, tubulin dimers are in GDP-bound state, owing to GTPase activity of alpha-tubulin. This is Tubulin alpha chain (TUB1) from Encephalitozoon hellem (Microsporidian parasite).